The sequence spans 547 residues: MRSDEVKKGIDRVAHRALLKALGVTDDEMDKPFIGVANAYNTIVPGHMTLDKLTQAVKEGVYAAGGVPFEFGIIGICDGIAMGHEGMCFSLPSRELVADTIEAMVEAHRFDGLVVVASCDKIIPGMLMAMLRLNIPAIAVTGGPMPYERVGGEKVSIKDAFEAAGMYKAGKLDDAGLKLYEDYCAPYCGSCQGLYTANSMQILTETLGLSLPYCSTSPCPSSRKLRIAKQSGKRVVELVMQNIKPLDFVNERSFENAITMDMLVGGSTNTVLHLPAIAKEAGIRLSLDLFDEISRRTPHIVSIDPASKEMVVDLDESGGVPMLIKKARKYFHDEMTVSGKTLYEIAEMAVLRGRDIIASPDNPLHKEGGIAILKGNLAENGAVIKAAAVSEDMMRFEGTAKVYDSEKEALNAILDGKVEEGDVVVIRYMGPKGAPGMPEMLLPTAAISGLGLQKVALITDGRFSGATRGPCIGHVSPEAAVGGNIALVEDGDKISIDIPARKLEVKLSDEELAERRAKWKPKEKELKGYLAKYAKLVRGAEEGAALL.

D78 provides a ligand contact to Mg(2+). C119 is a binding site for [2Fe-2S] cluster. 2 residues coordinate Mg(2+): D120 and K121. N6-carboxylysine is present on K121. C191 provides a ligand contact to [2Fe-2S] cluster. E439 contacts Mg(2+). S464 acts as the Proton acceptor in catalysis.

This sequence belongs to the IlvD/Edd family. As to quaternary structure, homodimer. [2Fe-2S] cluster serves as cofactor. Mg(2+) is required as a cofactor.

It carries out the reaction (2R)-2,3-dihydroxy-3-methylbutanoate = 3-methyl-2-oxobutanoate + H2O. It catalyses the reaction (2R,3R)-2,3-dihydroxy-3-methylpentanoate = (S)-3-methyl-2-oxopentanoate + H2O. Its pathway is amino-acid biosynthesis; L-isoleucine biosynthesis; L-isoleucine from 2-oxobutanoate: step 3/4. It participates in amino-acid biosynthesis; L-valine biosynthesis; L-valine from pyruvate: step 3/4. Functionally, functions in the biosynthesis of branched-chain amino acids. Catalyzes the dehydration of (2R,3R)-2,3-dihydroxy-3-methylpentanoate (2,3-dihydroxy-3-methylvalerate) into 2-oxo-3-methylpentanoate (2-oxo-3-methylvalerate) and of (2R)-2,3-dihydroxy-3-methylbutanoate (2,3-dihydroxyisovalerate) into 2-oxo-3-methylbutanoate (2-oxoisovalerate), the penultimate precursor to L-isoleucine and L-valine, respectively. The chain is Dihydroxy-acid dehydratase from Archaeoglobus fulgidus (strain ATCC 49558 / DSM 4304 / JCM 9628 / NBRC 100126 / VC-16).